Reading from the N-terminus, the 510-residue chain is Cytochrome P450 monooxygenase BOT1 (510 aa).

A helical membrane pass occupies residues 16 to 36 (PLAWAALILASFTLYSVQLVV). Heme is bound at residue cysteine 454. Asparagine 476 carries an N-linked (GlcNAc...) asparagine glycan.

It belongs to the cytochrome P450 family. Heme serves as cofactor.

It is found in the membrane. It functions in the pathway secondary metabolite biosynthesis. Functionally, cytochrome P450 monooxygenase; part of the gene cluster that mediates the biosynthesis of botrydial. Botrydial is necessary for colonization of plant tissue by the T4 strain. It is a strain-dependent virulence factor since highly aggressive strains like SAS56 or B05 still retain substantial virulence when botrydial synthesis is impaired, since they produce also botcinic acid. The first step of botrydial biosynthesis is performed by the sesquiterpene synthase BOT2 which catalyzes the cyclization of farnesyl diphosphate (FPP) to presilphiperfolan-8-beta-ol (PSP). The cytochrome P450 monooxygenase BOT4 then catalyzes the hydroxylation at C-4 to give a probotryane intermediate. Acetylation of the hydroxyl at C-4 is carried out by the acetyltransferase BOT5, followed by the combined action of the P450 monooxygenases BOT3 and BOT1, to yield finally the glycol, via the regio- and stereospecific hydroxylations at C-10 and C-15 of the probotryane intermediates, respectively. The cleavage of the C10-C15 bond of probotryane skeleton is an intriguing and chemically important reaction, which could be mediated by some of the monooxygenases or by a combination of them. It is possible that either BOT3 or BOT1 would oxidize either the 10- or the 15-hydroxy group to the hydroperoxide derivative, which would then undergo heterolytic fragmentation to give the dialdehyde botrydial. Finally, the dehydrogenase BOT7 might be involved in the conversion of botrydial to dihydrobotrydial. In Botryotinia fuckeliana (Noble rot fungus), this protein is Cytochrome P450 monooxygenase BOT1.